A 310-amino-acid polypeptide reads, in one-letter code: HPr kinase/phosphorylase 1 (310 aa).

Catalysis depends on residues H139 and K160. G154–S161 is a binding site for ATP. S161 is a Mg(2+) binding site. D178 (proton acceptor; for phosphorylation activity. Proton donor; for dephosphorylation activity) is an active-site residue. The interval L202–N211 is important for the catalytic mechanism of both phosphorylation and dephosphorylation. E203 provides a ligand contact to Mg(2+). The active site involves R244. Residues P265–R270 are important for the catalytic mechanism of dephosphorylation.

This sequence belongs to the HPrK/P family. As to quaternary structure, homohexamer. Requires Mg(2+) as cofactor.

It carries out the reaction [HPr protein]-L-serine + ATP = [HPr protein]-O-phospho-L-serine + ADP + H(+). The catalysed reaction is [HPr protein]-O-phospho-L-serine + phosphate + H(+) = [HPr protein]-L-serine + diphosphate. Functionally, catalyzes the ATP- as well as the pyrophosphate-dependent phosphorylation of a specific serine residue in HPr, a phosphocarrier protein of the phosphoenolpyruvate-dependent sugar phosphotransferase system (PTS). HprK/P also catalyzes the pyrophosphate-producing, inorganic phosphate-dependent dephosphorylation (phosphorolysis) of seryl-phosphorylated HPr (P-Ser-HPr). The two antagonistic activities of HprK/P are regulated by several intracellular metabolites, which change their concentration in response to the absence or presence of rapidly metabolisable carbon sources (glucose, fructose, etc.) in the growth medium. Also phosphorylates/dephosphorylates the HPr-like catabolite repression protein crh on a specific serine residue. Therefore, by controlling the phosphorylation state of HPr and crh, HPrK/P is a sensor enzyme that plays a major role in the regulation of carbon metabolism and sugar transport: it mediates carbon catabolite repression (CCR), and regulates PTS-catalyzed carbohydrate uptake and inducer exclusion. This Oceanobacillus iheyensis (strain DSM 14371 / CIP 107618 / JCM 11309 / KCTC 3954 / HTE831) protein is HPr kinase/phosphorylase 1 (hprK1).